Reading from the N-terminus, the 88-residue chain is Elongation factor 1-beta (88 aa).

Belongs to the EF-1-beta/EF-1-delta family.

Functionally, promotes the exchange of GDP for GTP in EF-1-alpha/GDP, thus allowing the regeneration of EF-1-alpha/GTP that could then be used to form the ternary complex EF-1-alpha/GTP/AAtRNA. The chain is Elongation factor 1-beta from Halorubrum lacusprofundi (strain ATCC 49239 / DSM 5036 / JCM 8891 / ACAM 34).